The chain runs to 373 residues: Ferroptosis suppressor protein 1 (373 aa).

Glycine 2 carries N-myristoyl glycine lipidation. A helical membrane pass occupies residues 7–27 (VESGALHVVIVGGGFGGIAAA). 6-hydroxy-FAD is bound by residues 18–22 (GGGFG), arginine 54, and valine 82. At lysine 168 the chain carries N6-acetyllysine; by KAT2B. A 6-hydroxy-FAD-binding site is contributed by aspartate 285.

The protein belongs to the FAD-dependent oxidoreductase family. As to quaternary structure, interacts with importin subunits KPNA2 and IPO5; this interaction likely mediates the translocation into the nucleus upon oxidative stress. Requires 6-hydroxy-FAD as cofactor. Post-translationally, N-myristoylation at Gly-2 mediates the recruitment to lipid droplets and plasma membrane, enabling its anti-lipid peroxidation activity. Acetylation at Lys-168 prevents AIFM2 ubiquitination and degradation, thereby inhibiting ferroptosis. KAT2B mediates acetylation at Lys-168, while HDAC3 removes it. In terms of processing, ubiquitinated. AIFM2 undergoes 'Lys-29'-ubiquitination and proteasomal degradation, which is inhibited by acetylation at Lys-168. Detected in most normal tissues as two transcripts of 1.8 and 4.0 kb in length, respectively. Highly expressed in heart, moderately in liver and skeletal muscles, and expressed at low levels in placenta, lung, kidney, and pancreas. Both transcripts expressed following p53/TP53 induction. The shorter 1.8 kb transcript seems to be the major transcript in EB1 colon cancer cells.

Its subcellular location is the lipid droplet. The protein resides in the cell membrane. It is found in the cytoplasm. The protein localises to the mitochondrion membrane. It localises to the nucleus. The catalysed reaction is ubiquinone-10 + NADH + H(+) = ubiquinol-10 + NAD(+). It catalyses the reaction phylloquinone + NADH + H(+) = phylloquinol + NAD(+). It carries out the reaction menaquinone-4 + NADH + H(+) = menaquinol-4 + NAD(+). The enzyme catalyses menadione + NADH + H(+) = menadiol + NAD(+). With respect to regulation, the modification by 4-hydroxy-2-nonenal (HNE) adduction in mitochondria results in loss of the oxidoreductase activity and activation of a novel function in mitochondrial oxidative stress signaling. Its function is as follows. An NAD(P)H-dependent oxidoreductase that acts as a key inhibitor of ferroptosis. At the plasma membrane, catalyzes reduction of coenzyme Q/ubiquinone-10 to ubiquinol-10, a lipophilic radical-trapping antioxidant that prevents lipid oxidative damage and consequently ferroptosis. Acts in parallel to GPX4 to suppress phospholipid peroxidation and ferroptosis. This anti-ferroptotic function is independent of cellular glutathione levels. Also acts as a potent radical-trapping antioxidant by mediating warfarin-resistant vitamin K reduction in the canonical vitamin K cycle: catalyzes NAD(P)H-dependent reduction of vitamin K (phylloquinone, menaquinone-4 and menadione) to hydroquinone forms. Hydroquinones act as potent radical-trapping antioxidants inhibitor of phospholipid peroxidation and ferroptosis. May play a role in mitochondrial stress signaling. Upon oxidative stress, associates with the lipid peroxidation end product 4-hydroxy-2-nonenal (HNE) forming a lipid adduct devoid of oxidoreductase activity, which then translocates from mitochondria into the nucleus triggering DNA damage and cell death. Capable of DNA binding in a non-sequence specific way. This chain is Ferroptosis suppressor protein 1, found in Homo sapiens (Human).